Reading from the N-terminus, the 74-residue chain is MLEVLKRINTLAQKEREQGLTSEEQALRVDLRQEYLRTIREQFNKTLMGVTIYDPTGEDVTPEKLKEEQQKYFD.

The disordered stretch occupies residues 53–74; it reads YDPTGEDVTPEKLKEEQQKYFD. The span at 61–74 shows a compositional bias: basic and acidic residues; sequence TPEKLKEEQQKYFD.

Belongs to the UPF0291 family.

The protein resides in the cytoplasm. This chain is UPF0291 protein EF_0064, found in Enterococcus faecalis (strain ATCC 700802 / V583).